Consider the following 489-residue polypeptide: GTPase Der (489 aa).

EngA-type G domains are found at residues 3 to 166 (PVVA…AEAM) and 200 to 373 (IKLA…ESAT). GTP is bound by residues 9 to 16 (GRPNVGKS), 56 to 60 (DTGGI), 118 to 121 (NKVD), 206 to 213 (GKPNVGKS), 253 to 257 (DTAGV), and 318 to 321 (NKWD). In terms of domain architecture, KH-like spans 374 to 458 (RRVSTSMLTR…PIQVRFQEGG (85 aa)).

This sequence belongs to the TRAFAC class TrmE-Era-EngA-EngB-Septin-like GTPase superfamily. EngA (Der) GTPase family. In terms of assembly, associates with the 50S ribosomal subunit.

Functionally, GTPase that plays an essential role in the late steps of ribosome biogenesis. The protein is GTPase Der of Shewanella loihica (strain ATCC BAA-1088 / PV-4).